A 216-amino-acid polypeptide reads, in one-letter code: Phosphatidylserine decarboxylase proenzyme (216 aa).

The active-site Schiff-base intermediate with substrate; via pyruvic acid is the serine 182. Serine 182 bears the Pyruvic acid (Ser); by autocatalysis mark.

This sequence belongs to the phosphatidylserine decarboxylase family. PSD-A subfamily. In terms of assembly, heterodimer of a large membrane-associated beta subunit and a small pyruvoyl-containing alpha subunit. It depends on pyruvate as a cofactor. In terms of processing, is synthesized initially as an inactive proenzyme. Formation of the active enzyme involves a self-maturation process in which the active site pyruvoyl group is generated from an internal serine residue via an autocatalytic post-translational modification. Two non-identical subunits are generated from the proenzyme in this reaction, and the pyruvate is formed at the N-terminus of the alpha chain, which is derived from the carboxyl end of the proenzyme. The post-translation cleavage follows an unusual pathway, termed non-hydrolytic serinolysis, in which the side chain hydroxyl group of the serine supplies its oxygen atom to form the C-terminus of the beta chain, while the remainder of the serine residue undergoes an oxidative deamination to produce ammonia and the pyruvoyl prosthetic group on the alpha chain.

The protein resides in the cell membrane. The enzyme catalyses a 1,2-diacyl-sn-glycero-3-phospho-L-serine + H(+) = a 1,2-diacyl-sn-glycero-3-phosphoethanolamine + CO2. It functions in the pathway phospholipid metabolism; phosphatidylethanolamine biosynthesis; phosphatidylethanolamine from CDP-diacylglycerol: step 2/2. Its function is as follows. Catalyzes the formation of phosphatidylethanolamine (PtdEtn) from phosphatidylserine (PtdSer). The chain is Phosphatidylserine decarboxylase proenzyme from Burkholderia mallei (strain NCTC 10247).